A 561-amino-acid polypeptide reads, in one-letter code: Dihydroxy-acid dehydratase (561 aa).

Asp80 contacts Mg(2+). Cys121 is a binding site for [2Fe-2S] cluster. Positions 122 and 123 each coordinate Mg(2+). Position 123 is an N6-carboxylysine (Lys123). [2Fe-2S] cluster is bound at residue Cys194. Residue Glu448 coordinates Mg(2+). Ser474 serves as the catalytic Proton acceptor.

It belongs to the IlvD/Edd family. As to quaternary structure, homodimer. Requires [2Fe-2S] cluster as cofactor. It depends on Mg(2+) as a cofactor.

The enzyme catalyses (2R)-2,3-dihydroxy-3-methylbutanoate = 3-methyl-2-oxobutanoate + H2O. The catalysed reaction is (2R,3R)-2,3-dihydroxy-3-methylpentanoate = (S)-3-methyl-2-oxopentanoate + H2O. It functions in the pathway amino-acid biosynthesis; L-isoleucine biosynthesis; L-isoleucine from 2-oxobutanoate: step 3/4. Its pathway is amino-acid biosynthesis; L-valine biosynthesis; L-valine from pyruvate: step 3/4. In terms of biological role, functions in the biosynthesis of branched-chain amino acids. Catalyzes the dehydration of (2R,3R)-2,3-dihydroxy-3-methylpentanoate (2,3-dihydroxy-3-methylvalerate) into 2-oxo-3-methylpentanoate (2-oxo-3-methylvalerate) and of (2R)-2,3-dihydroxy-3-methylbutanoate (2,3-dihydroxyisovalerate) into 2-oxo-3-methylbutanoate (2-oxoisovalerate), the penultimate precursor to L-isoleucine and L-valine, respectively. This is Dihydroxy-acid dehydratase from Anaeromyxobacter sp. (strain Fw109-5).